Reading from the N-terminus, the 196-residue chain is GTP cyclohydrolase-2 (196 aa).

49 to 53 is a binding site for GTP; that stretch reads RVHSE. Zn(2+) contacts are provided by cysteine 54, cysteine 65, and cysteine 67. GTP contacts are provided by residues glutamine 70, 92 to 94, and threonine 114; that span reads EGR. Residue aspartate 126 is the Proton acceptor of the active site. Arginine 128 acts as the Nucleophile in catalysis. Positions 149 and 154 each coordinate GTP.

Belongs to the GTP cyclohydrolase II family. Homodimer. Requires Zn(2+) as cofactor.

The enzyme catalyses GTP + 4 H2O = 2,5-diamino-6-hydroxy-4-(5-phosphoribosylamino)-pyrimidine + formate + 2 phosphate + 3 H(+). It participates in cofactor biosynthesis; riboflavin biosynthesis; 5-amino-6-(D-ribitylamino)uracil from GTP: step 1/4. Its function is as follows. Catalyzes the conversion of GTP to 2,5-diamino-6-ribosylamino-4(3H)-pyrimidinone 5'-phosphate (DARP), formate and pyrophosphate. In Escherichia coli O45:K1 (strain S88 / ExPEC), this protein is GTP cyclohydrolase-2.